Here is a 224-residue protein sequence, read N- to C-terminus: UPF0758 protein VIBHAR_00653 (224 aa).

One can recognise an MPN domain in the interval 102 to 224 (ALTSPEQTKL…SVSFAERGWI (123 aa)). Zn(2+) is bound by residues H173, H175, and D186. The JAMM motif motif lies at 173–186 (HNHPSGVAEPSQAD).

Belongs to the UPF0758 family.

This Vibrio campbellii (strain ATCC BAA-1116) protein is UPF0758 protein VIBHAR_00653.